We begin with the raw amino-acid sequence, 62 residues long: MTIAFQLAVFALIATSSILLISVPVVFASPDGWSSKKNVVFSGTSLWIGLVFLVGILNSLIY.

2 helical membrane-spanning segments follow: residues 8–28 (AVFALIATSSILLISVPVVFA) and 41–61 (FSGTSLWIGLVFLVGILNSLI).

The protein belongs to the PsbZ family. As to quaternary structure, PSII is composed of 1 copy each of membrane proteins PsbA, PsbB, PsbC, PsbD, PsbE, PsbF, PsbH, PsbI, PsbJ, PsbK, PsbL, PsbM, PsbT, PsbY, PsbZ, Psb30/Ycf12, at least 3 peripheral proteins of the oxygen-evolving complex and a large number of cofactors. It forms dimeric complexes.

It localises to the plastid. Its subcellular location is the chloroplast thylakoid membrane. In terms of biological role, may control the interaction of photosystem II (PSII) cores with the light-harvesting antenna, regulates electron flow through the 2 photosystem reaction centers. PSII is a light-driven water plastoquinone oxidoreductase, using light energy to abstract electrons from H(2)O, generating a proton gradient subsequently used for ATP formation. This Nymphaea alba (White water-lily) protein is Photosystem II reaction center protein Z.